A 185-amino-acid chain; its full sequence is uncharacterized protein (185 aa).

The next 4 helical transmembrane spans lie at 5–25 (SFLISTLFDLYIMVVILRIWL), 63–83 (LATVLFAYVLCVLKFVVLILI), 97–117 (FLGLLSLIKAAGGLLFWVLLI), and 149–169 (IIPAIGGLDLSVLVLFIGLQF).

The protein belongs to the YggT family.

The protein resides in the cell membrane. This is an uncharacterized protein from Vibrio alginolyticus.